The following is a 572-amino-acid chain: AAA ATPase forming ring-shaped complexes (572 aa).

The interval 1-22 (MTEPRHESGSAAPQRPATDPVQ) is disordered. Positions 21–67 (VQRQVNLLRDQKRNLDKQAAALASQNEKLVRLLNASRQEIVGLKKTL) form a coiled coil. An ATP-binding site is contributed by 270–275 (GNGKTL). Positions 527-539 (HEQQDLPDTEDSE) are enriched in acidic residues. Residues 527 to 572 (HEQQDLPDTEDSEDWARLTGRRGDTIDSVHMASHRPQGEPGPGATP) are disordered.

The protein belongs to the AAA ATPase family. In terms of assembly, homohexamer. Assembles into a hexameric ring structure.

In Kocuria rhizophila (strain ATCC 9341 / DSM 348 / NBRC 103217 / DC2201), this protein is AAA ATPase forming ring-shaped complexes.